The chain runs to 2335 residues: Pre-mRNA-processing-splicing factor 8 (2335 aa).

An N-acetylalanine modification is found at A2. The tract at residues 812–1303 is reverse transcriptase homology domain; that stretch reads TTVHWLESRR…KIQTRIKIGL (492 aa). Phosphoserine occurs at positions 859 and 1358. Residues 1304–1577 are linker; sequence NSKMPSRFPP…TLKISLIQIF (274 aa). K1425 is subject to N6,N6-dimethyllysine. K1463 bears the N6-acetyllysine mark. The tract at residues 1513–1526 is important for branch point selection; that stretch reads MKWKKLTNAQRSGL. A restriction endonuclease homology domain region spans residues 1581-1752; the sequence is LWQKIHESIV…LRERIRKGLQ (172 aa). Residues 1669–2034 are involved in interaction with pre-mRNA 5' splice site; the sequence is GDYDSHDIER…QIAEIEKQTK (366 aa). Residues 1767-2020 form an RNase H homology domain region; the sequence is NYGELFSNQI…ILGMEISAPS (254 aa). Residues 2103-2234 enclose the MPN domain; that stretch reads TYILPKNVLK…LTAYKLTPSG (132 aa). The required for interaction with EFTUD2 and SNRNP200 stretch occupies residues 2301-2335; it reads PKEFYHEVHRPSHFLNFALLQEGEVYSADREDLYA.

In terms of assembly, part of the U5 snRNP complex. Component of the U4/U6-U5 tri-snRNP complex composed of the U4, U6 and U5 snRNAs and at least PRPF3, PRPF4, PRPF6, PRPF8, PRPF31, SNRNP200, TXNL4A, SNRNP40, DDX23, CD2BP2, PPIH, SNU13, EFTUD2, SART1 and USP39. Component of the U5.U4atac/U6atac snRNP complexes in U12-dependent spliceosomes. Within the minor spliceosome, which acts on U12-type introns, interacts with PPIL2 and RBM48. Core component of U2-type precatalytic, catalytic and postcatalytic spliceosomal complexes. Found in a mRNA splicing-dependent exon junction complex (EJC) with SRRM1. Interacts with U5 snRNP proteins SNRP116 and SNRNP40. Interacts with EFTUD2. Interacts (via the MPN (JAB/Mov34) domain) with PRPF3 ('Lys-63'-linked polyubiquitinated); may stabilize the U4/U6-U5 tri-snRNP complex. Interacts (via RNase H homology domain) with AAR2. Interacts with RPAP3 and URI1 in a ZNHIT2-dependent manner. Interacts with C9orf78. Interacts with SNRNP200; the interaction is direct. Interacts with TSSC4; the interaction is direct. In terms of tissue distribution, widely expressed.

Its subcellular location is the nucleus. The protein resides in the nucleus speckle. Plays a role in pre-mRNA splicing as core component of precatalytic, catalytic and postcatalytic spliceosomal complexes, both of the predominant U2-type spliceosome and the minor U12-type spliceosome. Functions as a scaffold that mediates the ordered assembly of spliceosomal proteins and snRNAs. Required for the assembly of the U4/U6-U5 tri-snRNP complex, a building block of the spliceosome. Functions as a scaffold that positions spliceosomal U2, U5 and U6 snRNAs at splice sites on pre-mRNA substrates, so that splicing can occur. Interacts with both the 5' and the 3' splice site. The protein is Pre-mRNA-processing-splicing factor 8 (PRPF8) of Homo sapiens (Human).